The primary structure comprises 309 residues: Cytochrome c biogenesis protein CcsA (309 aa).

8 helical membrane passes run 18–38 (LGIL…GAVF), 43–63 (FFIV…QLLF), 67–87 (ISGH…AWGI), 102–122 (IIPS…CFVL), 148–168 (VMLS…VLFI), 216–236 (SILI…VWAN), 250–267 (TWAF…HMRI), and 279–299 (LATS…FLGI).

This sequence belongs to the CcmF/CycK/Ccl1/NrfE/CcsA family. As to quaternary structure, may interact with ccs1.

It is found in the cellular thylakoid membrane. Functionally, required during biogenesis of c-type cytochromes (cytochrome c6 and cytochrome f) at the step of heme attachment. The chain is Cytochrome c biogenesis protein CcsA from Prochlorococcus marinus (strain MIT 9312).